The primary structure comprises 359 residues: UDP-N-acetylglucosamine--N-acetylmuramyl-(pentapeptide) pyrophosphoryl-undecaprenol N-acetylglucosamine transferase (359 aa).

UDP-N-acetyl-alpha-D-glucosamine-binding positions include 15-17 (SGG), N127, R164, S192, I246, 265-270 (ALTVSE), and Q290.

Belongs to the glycosyltransferase 28 family. MurG subfamily.

The protein localises to the cell membrane. It catalyses the reaction di-trans,octa-cis-undecaprenyl diphospho-N-acetyl-alpha-D-muramoyl-L-alanyl-D-glutamyl-meso-2,6-diaminopimeloyl-D-alanyl-D-alanine + UDP-N-acetyl-alpha-D-glucosamine = di-trans,octa-cis-undecaprenyl diphospho-[N-acetyl-alpha-D-glucosaminyl-(1-&gt;4)]-N-acetyl-alpha-D-muramoyl-L-alanyl-D-glutamyl-meso-2,6-diaminopimeloyl-D-alanyl-D-alanine + UDP + H(+). Its pathway is cell wall biogenesis; peptidoglycan biosynthesis. In terms of biological role, cell wall formation. Catalyzes the transfer of a GlcNAc subunit on undecaprenyl-pyrophosphoryl-MurNAc-pentapeptide (lipid intermediate I) to form undecaprenyl-pyrophosphoryl-MurNAc-(pentapeptide)GlcNAc (lipid intermediate II). This Wigglesworthia glossinidia brevipalpis protein is UDP-N-acetylglucosamine--N-acetylmuramyl-(pentapeptide) pyrophosphoryl-undecaprenol N-acetylglucosamine transferase.